A 686-amino-acid polypeptide reads, in one-letter code: Methionine--tRNA ligase (686 aa).

The short motif at 15-25 (PYTNGPIHIGH) is the 'HIGH' region element. Cysteine 147, cysteine 150, cysteine 160, and cysteine 163 together coordinate Zn(2+). The 'KMSKS' region signature appears at 336 to 340 (KLSTS). Position 339 (threonine 339) interacts with ATP. A tRNA-binding domain is found at 584 to 686 (DFAKMDLRVG…AGVGNGEGIN (103 aa)).

Belongs to the class-I aminoacyl-tRNA synthetase family. MetG type 1 subfamily. Homodimer. It depends on Zn(2+) as a cofactor.

It localises to the cytoplasm. The enzyme catalyses tRNA(Met) + L-methionine + ATP = L-methionyl-tRNA(Met) + AMP + diphosphate. Functionally, is required not only for elongation of protein synthesis but also for the initiation of all mRNA translation through initiator tRNA(fMet) aminoacylation. The protein is Methionine--tRNA ligase of Flavobacterium psychrophilum (strain ATCC 49511 / DSM 21280 / CIP 103535 / JIP02/86).